Consider the following 574-residue polypeptide: ATP-dependent RNA helicase RhlB (574 aa).

The Q motif signature appears at 9 to 37 (VTFSSFDLHPALVAGLESAGFTRCTPIQA). In terms of domain architecture, Helicase ATP-binding spans 40–220 (LPVALPGGDV…YEHMNEPEKL (181 aa)). 53-60 (AQTGTGKT) provides a ligand contact to ATP. The short motif at 166–169 (DEAD) is the DEAD box element. The Helicase C-terminal domain occupies 231 to 393 (RVRQRIYFPS…PVTSELLTPL (163 aa)). The span at 423–432 (EQRAAEEQRR) shows a compositional bias: basic and acidic residues. The interval 423-574 (EQRAAEEQRR…RRLRSLVSGN (152 aa)) is disordered. The segment covering 435–449 (GRSGPGGGSRSGSGG) has biased composition (gly residues). The span at 477–495 (AAAAQTEKPVVAAAAAQAP) shows a compositional bias: low complexity. Positions 506-515 (PRKRRRRRNG) are enriched in basic residues. Composition is skewed to low complexity over residues 523–535 (PAVA…APAA) and 553–562 (SSGSPSLLGR).

It belongs to the DEAD box helicase family. RhlB subfamily. Component of the RNA degradosome, which is a multiprotein complex involved in RNA processing and mRNA degradation.

It is found in the cytoplasm. The enzyme catalyses ATP + H2O = ADP + phosphate + H(+). Its function is as follows. DEAD-box RNA helicase involved in RNA degradation. Has RNA-dependent ATPase activity and unwinds double-stranded RNA. The polypeptide is ATP-dependent RNA helicase RhlB (Xanthomonas oryzae pv. oryzae (strain KACC10331 / KXO85)).